Reading from the N-terminus, the 299-residue chain is MSLDSNSDTEFELVPKFQTQPTRGDAPKSPELEEVSTVSDLQDELKSLRLENKDLYSLMEQLKKDNDEMKKSLEKVMKNQAELGELEEIRAIEDDKRSEKLATELVAIRADCSSLNRSERECRYDIERIFAKLEEESFFSLHENPIQRTISGTWKVIKISNFDEFFAAQDISQFHALIIKNQCLYFKVNKHQVKTQSYHERSWKPRAREEIHYFNFPNSLGELYSVEKNKLILTVTQEENDKKKVISRVERSVVDGQMKEIWERNGVICERIFKKIPDQRDSRAYPRSIYGSESQNIYY.

The disordered stretch occupies residues 1 to 38 (MSLDSNSDTEFELVPKFQTQPTRGDAPKSPELEEVSTV).

Belongs to the calycin superfamily. Fatty-acid binding protein (FABP) family.

This is an uncharacterized protein from Caenorhabditis elegans.